The primary structure comprises 381 residues: Chaperone protein DnaJ (381 aa).

Residues 4–69 (DYYEILGVAR…EKRARYDQFG (66 aa)) enclose the J domain. A CR-type zinc finger spans residues 139 to 221 (GGEKELRVTR…CGGSGLVRKT (83 aa)). Zn(2+) is bound by residues C152, C155, C169, C172, C195, C198, C209, and C212. CXXCXGXG motif repeat units lie at residues 152–159 (CGHCHGNG), 169–176 (CPTCQGRG), 195–202 (CSTCRGEG), and 209–216 (CRECGGSG).

The protein belongs to the DnaJ family. As to quaternary structure, homodimer. Zn(2+) is required as a cofactor.

The protein localises to the cytoplasm. Participates actively in the response to hyperosmotic and heat shock by preventing the aggregation of stress-denatured proteins and by disaggregating proteins, also in an autonomous, DnaK-independent fashion. Unfolded proteins bind initially to DnaJ; upon interaction with the DnaJ-bound protein, DnaK hydrolyzes its bound ATP, resulting in the formation of a stable complex. GrpE releases ADP from DnaK; ATP binding to DnaK triggers the release of the substrate protein, thus completing the reaction cycle. Several rounds of ATP-dependent interactions between DnaJ, DnaK and GrpE are required for fully efficient folding. Also involved, together with DnaK and GrpE, in the DNA replication of plasmids through activation of initiation proteins. The sequence is that of Chaperone protein DnaJ from Carboxydothermus hydrogenoformans (strain ATCC BAA-161 / DSM 6008 / Z-2901).